Reading from the N-terminus, the 289-residue chain is NAD(P)H-hydrate epimerase (289 aa).

The YjeF N-terminal domain occupies 71–277; sequence AQTIDNELMS…SIVEKYNLKV (207 aa). (6S)-NADPHX is bound at residue 122-126; sequence NNGGD. K(+) contacts are provided by Asn-123 and Asp-185. (6S)-NADPHX contacts are provided by residues 189-195 and Asp-218; that span reads GFSFTGE. Ser-221 is a binding site for K(+).

This sequence belongs to the NnrE/AIBP family. It depends on K(+) as a cofactor.

It catalyses the reaction (6R)-NADHX = (6S)-NADHX. The enzyme catalyses (6R)-NADPHX = (6S)-NADPHX. Catalyzes the epimerization of the S- and R-forms of NAD(P)HX, a damaged form of NAD(P)H that is a result of enzymatic or heat-dependent hydration. This is a prerequisite for the S-specific NAD(P)H-hydrate dehydratase to allow the repair of both epimers of NAD(P)HX. This is NAD(P)H-hydrate epimerase from Plasmodium vivax (strain Salvador I).